The sequence spans 651 residues: Probable potassium transport system protein Kup (651 aa).

A run of 12 helical transmembrane segments spans residues 41-61, 82-102, 130-150, 163-183, 194-214, 235-255, 276-296, 309-329, 366-386, 395-415, 426-446, and 450-470; these read LVLG…IYAF, VVSL…VLFV, LILG…VITP, IVAP…LVTL, VAIV…ASGL, FLTV…LAMT, WLWI…AFIL, MIPS…TVIA, IYIP…VLGF, AYGI…YIVM, ALPI…ANII, and EGGW…WTWV.

This sequence belongs to the HAK/KUP transporter (TC 2.A.72) family.

The protein localises to the cell inner membrane. It carries out the reaction K(+)(in) + H(+)(in) = K(+)(out) + H(+)(out). Transport of potassium into the cell. Likely operates as a K(+):H(+) symporter. The protein is Probable potassium transport system protein Kup of Brucella suis (strain ATCC 23445 / NCTC 10510).